The sequence spans 536 residues: MLNTDQLLVRAISERPRKSTEPLVPGTPTGLFSLLSNISPEEQGRLGSGDSLQSQSCQQQRSYSAGQTTKKERKPRRRNKKGRGSAEAEDLFSSPRKPSFPFQWAWESFIIDGQALLQSGSSVAVGHRSLLFPPAAPQCKTRHKSVANLSEDLRACHKSEVQNLGRRYQPGAWANLSLPLGKAESQGLERPTFWSTGKGSGSECEDVSEVEGQNADEAEKSLSTGELPQLPGQGLTLEEELISEVMEEEEHNRRKGSSVNKGRNSGEKGSEEGELQSHNQGSSSNSNSLRKSPKGTSGAKEFKGPWDLERLHRQLQEELESGPQKQTWKALRAAVQASARNRKTPVTGEEESFLTANFPNRTFHKRQEATRNLLQAWEQQQLKEKQQAEMRRAREQQVQQQVARCLAAYTPGGNRGTLGPQRKLEELRRKERQRFAEYQAELQGIQHRVQARPFLFQQAMQTNARLTANRRFSQVLSALGVDEEQLLAEAGNAEGIPRKHRSYRSFGVEMESSPQSPPKTEPTSSQPGRHPSPTLD.

Disordered regions lie at residues 1–94, 185–234, and 246–305; these read MLNT…LFSS, SQGL…PGQG, and MEEE…FKGP. Residues 48 to 64 are compositionally biased toward low complexity; that stretch reads SGDSLQSQSCQQQRSYS. Residues 71 to 83 are compositionally biased toward basic residues; the sequence is KERKPRRRNKKGR. A coiled-coil region spans residues 375-451; the sequence is QAWEQQQLKE…LQGIQHRVQA (77 aa). The tract at residues 491-536 is disordered; that stretch reads GNAEGIPRKHRSYRSFGVEMESSPQSPPKTEPTSSQPGRHPSPTLD.

This is Testis-specific protein 10-interacting protein (Tsga10ip) from Rattus norvegicus (Rat).